Here is a 435-residue protein sequence, read N- to C-terminus: AP-2 complex subunit mu (435 aa).

The region spanning 170–434 is the MHD domain; the sequence is RNELFLDVLE…IGRSGIYETR (265 aa). The a 1,2-diacyl-sn-glycero-3-phospho-(1D-myo-inositol-3,4,5-trisphosphate) site is built by Lys341, Lys345, and Lys354.

Belongs to the adaptor complexes medium subunit family. In terms of assembly, adaptor protein complex 2 (AP-2) is a heterotetramer composed of two large adaptins (alpha-type subunit and beta-type subunit), a medium adaptin (mu-type subunit) and a small adaptin (sigma-type subunit).

Its subcellular location is the cell membrane. It localises to the membrane. The protein resides in the coated pit. In terms of biological role, component of the adaptor complexes which link clathrin to receptors in coated vesicles. Clathrin-associated protein complexes are believed to interact with the cytoplasmic tails of membrane proteins, leading to their selection and concentration. AP50 is a subunit of the plasma membrane adaptor. The complex binds polyphosphoinositide-containing lipids. This chain is AP-2 complex subunit mu (ap2m1), found in Xenopus laevis (African clawed frog).